A 98-amino-acid chain; its full sequence is Small ribosomal subunit protein uS17 (98 aa).

It belongs to the universal ribosomal protein uS17 family. In terms of assembly, part of the 30S ribosomal subunit.

One of the primary rRNA binding proteins, it binds specifically to the 5'-end of 16S ribosomal RNA. This chain is Small ribosomal subunit protein uS17, found in Mesomycoplasma hyopneumoniae (strain 232) (Mycoplasma hyopneumoniae).